Here is an 81-residue protein sequence, read N- to C-terminus: uncharacterized protein (81 aa).

The interval 11-34 is disordered; that stretch reads GSVSSSNKVSVANGSSSSSFGSNG.

This is an uncharacterized protein from Dictyostelium discoideum (Social amoeba).